Here is a 127-residue protein sequence, read N- to C-terminus: Thioredoxin domain-containing protein 8 (127 aa).

Residues 2–127 enclose the Thioredoxin domain; it reads VQKIKSMREF…KLEEKIQELM (126 aa). A disulfide bridge connects residues C32 and C35.

It belongs to the thioredoxin family. Testis-specific. Expressed in spermatozoa, sperm tail, elongated and round spermatids.

The protein localises to the cytoplasm. The protein resides in the golgi apparatus. May be required for post-translational modifications of proteins required for acrosomal biogenesis. May act by reducing disulfide bonds within the sperm. The protein is Thioredoxin domain-containing protein 8 (Txndc8) of Rattus norvegicus (Rat).